The chain runs to 337 residues: B3 domain-containing protein REM16 (337 aa).

2 DNA-binding regions (TF-B3) span residues 22 to 116 (TLHF…FDGQ) and 223 to 321 (FLVF…FRGE).

It is found in the nucleus. This is B3 domain-containing protein REM16 (REM16) from Arabidopsis thaliana (Mouse-ear cress).